The chain runs to 347 residues: MSYAIRVAVVGASGYAGGEILRLLLGHPAYADDRLTIGTLTAAASSGDTLGEHHPHLTPLAHRVLESTELTVLAGHDVVFLGLPHGHSAALAERLGPETLIIDCGADFRLTDAGAWGRFYESPYAGSWPYGLPELPGGRERLQKARRIAVPGCYPTAILLALLPAMAEGLIEPAVTVFAVSGISGAGRAAKTKLLGSEVIGSARAYNIGGTHRHTAEIIQGLRVVTDRAVTVSFTPVLIPTSRGILAACTARTSSSLSKLRTAYEKAYQVEPFVYLMPEGQLPFTGAVIGSNAAHIAVAVDEAAETFIAISAIDNLVKGTAGAAVQSMNLALGWPEAEGLSVVGVAP.

Residue cysteine 153 is part of the active site.

It belongs to the NAGSA dehydrogenase family. Type 1 subfamily.

The protein localises to the cytoplasm. It catalyses the reaction N-acetyl-L-glutamate 5-semialdehyde + phosphate + NADP(+) = N-acetyl-L-glutamyl 5-phosphate + NADPH + H(+). It participates in amino-acid biosynthesis; L-arginine biosynthesis; N(2)-acetyl-L-ornithine from L-glutamate: step 3/4. Its function is as follows. Catalyzes the NADPH-dependent reduction of N-acetyl-5-glutamyl phosphate to yield N-acetyl-L-glutamate 5-semialdehyde. The chain is N-acetyl-gamma-glutamyl-phosphate reductase from Mycobacterium leprae (strain Br4923).